The chain runs to 194 residues: ATP-dependent Clp protease proteolytic subunit (194 aa).

S97 functions as the Nucleophile in the catalytic mechanism. H122 is a catalytic residue.

The protein belongs to the peptidase S14 family. In terms of assembly, fourteen ClpP subunits assemble into 2 heptameric rings which stack back to back to give a disk-like structure with a central cavity, resembling the structure of eukaryotic proteasomes.

The protein localises to the cytoplasm. It catalyses the reaction Hydrolysis of proteins to small peptides in the presence of ATP and magnesium. alpha-casein is the usual test substrate. In the absence of ATP, only oligopeptides shorter than five residues are hydrolyzed (such as succinyl-Leu-Tyr-|-NHMec, and Leu-Tyr-Leu-|-Tyr-Trp, in which cleavage of the -Tyr-|-Leu- and -Tyr-|-Trp bonds also occurs).. Its function is as follows. Cleaves peptides in various proteins in a process that requires ATP hydrolysis. Has a chymotrypsin-like activity. Plays a major role in the degradation of misfolded proteins. This Campylobacter jejuni subsp. jejuni serotype O:6 (strain 81116 / NCTC 11828) protein is ATP-dependent Clp protease proteolytic subunit.